The sequence spans 292 residues: Nucleotide-binding protein azo0399 (292 aa).

8-15 serves as a coordination point for ATP; the sequence is GLSGSGKS. GTP is bound at residue 57-60; the sequence is DMRS.

This sequence belongs to the RapZ-like family.

In terms of biological role, displays ATPase and GTPase activities. In Azoarcus sp. (strain BH72), this protein is Nucleotide-binding protein azo0399.